A 408-amino-acid polypeptide reads, in one-letter code: Solute carrier family 35 member F1 (408 aa).

The segment at 1–21 is disordered; that stretch reads MIPPEQPQQQLQPPSPAPPNH. 10 helical membrane passes run 60 to 80, 94 to 114, 129 to 147, 158 to 178, 186 to 206, 221 to 241, 247 to 267, 284 to 304, 311 to 331, and 335 to 355; these read MLIS…IGLT, VFQS…TLAV, WWKY…YLVV, IQLL…FFLL, FIGI…DVLV, LLVL…EYII, VEFL…QLAI, LLYV…PVVI, SVNL…LFLF, and FSGL…LYSS.

The protein belongs to the SLC35F solute transporter family.

The protein localises to the cytoplasmic vesicle. Its subcellular location is the secretory vesicle. The protein resides in the synaptic vesicle membrane. Its function is as follows. Putative solute transporter. The protein is Solute carrier family 35 member F1 (SLC35F1) of Homo sapiens (Human).